Reading from the N-terminus, the 137-residue chain is uncharacterized protein (137 aa).

This sequence belongs to the ycf72 family.

The protein localises to the plastid. Its subcellular location is the chloroplast. This is an uncharacterized protein from Zea mays (Maize).